A 163-amino-acid polypeptide reads, in one-letter code: 2,3-dimethylmalate dehydratase small subunit (163 aa).

It belongs to the LeuD family. LeuD type 2 subfamily. As to quaternary structure, heterodimer of a large and a small subunit.

It carries out the reaction (2R,3S)-2,3-dimethylmalate = dimethylmaleate + H2O. The protein operates within cofactor degradation; nicotinate degradation; propanoate and pyruvate from 6-hydroxynicotinate: step 7/8. The chain is 2,3-dimethylmalate dehydratase small subunit from Eubacterium barkeri (Clostridium barkeri).